Reading from the N-terminus, the 2871-residue chain is Fibrillin-1 (2871 aa).

The N-terminal stretch at 1-24 (MRRGGLLEVALGFTVLLASYTSHG) is a signal peptide. Residues 25 to 44 (ADTNLEAGNVKETRANRAKR) constitute a propeptide that is removed on maturation. Positions 45–81 (RGGGGHDALKGPNVCGSRYNAYCCPGWKTLPGGNQCI) are fibrillin unique N-terminal (FUN) domain. The segment at 45–450 (RGGGGHDALK…PPRVLPVNVT (406 aa)) is N-terminal domain. Disulfide bonds link C59/C68, C67/C80, C85/C94, C89/C100, C102/C111, C119/C129, C123/C134, C136/C145, C150/C160, C154/C166, and C168/C177. 3 consecutive EGF-like domains span residues 81–112 (IVPICRHSCGDGFCSRPNMCTCPSGQIAPSCG), 115–146 (SIQHCNIRCMNGGSCSDDHCLCQKGYIGTHCG), and 147–178 (QPVCESGCLNGGRCVAPNRCACTYGFTGPQCE). The interaction with MFAP4 stretch occupies residues 119 to 329 (CNIRCMNGGS…YTSPDGTRCI (211 aa)). In terms of domain architecture, TB 1 spans 184–236 (GPCFTVISNQMCQGQLSGIVCTKTLCCATVGRAWGHPCEMCPAQPHPCRRGFI). Residues 195-221 (CQGQLSGIVCTKTLCCATVGRAWGHPC) form a hybrid domain 1 region. The region spanning 246 to 287 (DVDECQAIPGLCQGGNCINTVGSFECKCPAGHKFNEVSQKCE) is the EGF-like 4; calcium-binding domain. 6 disulfides stabilise this stretch: C250–C262, C257–C271, C273–C286, C292–C304, C299–C313, and C315–C328. S268 carries O-linked (Glc) serine glycosylation. One can recognise an EGF-like 5; calcium-binding domain in the interval 288 to 329 (DIDECSTIPGICDGGECTNTVSSYFCKCPPGFYTSPDGTRCI). The 56-residue stretch at 334–389 (GYCYTALANGRCSNQLPQSITKMQCCCDVGRCWSPGVTVAPEMCPIRATEDFNKLC) folds into the TB 2 domain. Residue N448 is glycosylated (N-linked (GlcNAc...) asparagine). Positions 449–489 (VTDYCQLFRYLCQNGRCIPTPGSYRCECNKGFQLDLRGECI) constitute an EGF-like 6 domain. Intrachain disulfides connect C453-C465, C460-C474, C476-C488, C494-C504, C499-C513, C515-C528, C534-C546, C541-C555, C557-C570, C576-C587, C582-C596, C598-C611, C617-C628, C623-C637, and C639-C652. S471 is a glycosylation site (O-linked (Glc) serine). In terms of domain architecture, EGF-like 7; calcium-binding spans 490-529 (DVDECEKNPCAGGECINTQGSYTCQCRPGYQSTLTRTECR). Residue S510 is glycosylated (O-linked (Glc) serine). The region spanning 530–571 (DIDECLQNGRICNNGRCINTDGSFHCVCNAGFHVTRDGKNCE) is the EGF-like 8; calcium-binding domain. The EGF-like 9; calcium-binding domain occupies 572–612 (DMDECSIRNMCLNGMCINEDGSFKCICKPGFQLASDGRYCK). The region spanning 613 to 653 (DINECETPGICMNGRCVNTDGSYRCECFPGLAVGLDGRVCV) is the EGF-like 10; calcium-binding domain. The TB 3 domain maps to 659–711 (STCYGGYKRGQCVKPLFGAVTKSECCCASTEYAFGEPCQPCPSQNSAEYQALC). The EGF-like 11; calcium-binding domain occupies 723–764 (DINECALDPDICPNGICENLRGTYKCICNSGYEVDSTGKNCV). Disulfide bonds link C727–C739, C734–C748, C750–C763, C769–C781, C776–C790, C792–C805, C811–C821, C816–C830, C832–C845, C853–C875, C862–C887, C876–C890, C896–C908, C914–C926, C921–C935, and C937–C950. The EGF-like 12; calcium-binding domain occupies 765-806 (DINECVLNSLLCDNGQCRNTPGSFVCTCPKGFIYKPELKTCE). Residues 807–846 (DIDECESSPCINGVCKNSPGSFICECSSESTLDPTKTICI) form the EGF-like 13; calcium-binding domain. The TB 4 domain maps to 851–902 (GTCWQTVIDGRCEININGATLKSQCCSSLGAAWGSPCTPCQVDPICGKGYSR). A hybrid domain 2 region spans residues 862 to 887 (CEININGATLKSQCCSSLGAAWGSPC). In terms of domain architecture, EGF-like 14; calcium-binding spans 910–951 (DIDECEVFPGVCKNGLCVNSKGSFKCQCPSGMTLDATGRICL). The TB 5 domain occupies 956 to 1008 (ETCFLRYEDEECTLPVAGRHRMDACCCSVGAAWGTEECEECPVRNTPEYEELC). In terms of domain architecture, EGF-like 15; calcium-binding spans 1028-1069 (DINECKMIPNLCTHGKCRNTIGSFKCRCDSGFALDSEERNCT). 46 disulfides stabilise this stretch: C1032-C1044, C1039-C1053, C1055-C1068, C1074-C1086, C1081-C1095, C1097-C1111, C1117-C1129, C1124-C1138, C1140-C1153, C1159-C1171, C1166-C1180, C1182-C1195, C1201-C1212, C1208-C1221, C1223-C1236, C1242-C1254, C1249-C1263, C1265-C1278, C1284-C1296, C1291-C1305, C1307-C1320, C1326-C1339, C1333-C1348, C1350-C1361, C1367-C1380, C1374-C1389, C1391-C1402, C1408-C1420, C1415-C1429, C1431-C1444, C1450-C1461, C1456-C1470, C1472-C1485, C1491-C1502, C1497-C1511, C1513-C1526, C1534-C1562, C1549-C1574, C1563-C1577, C1564-C1589, C1610-C1622, C1617-C1631, C1633-C1646, C1652-C1663, C1658-C1672, and C1674-C1687. Residue N1067 is glycosylated (N-linked (GlcNAc...) asparagine). The 43-residue stretch at 1070-1112 (DIDECRISPDLCGRGQCVNTPGDFECKCDEGYESGFMMMKNCM) folds into the EGF-like 16; calcium-binding domain. An EGF-like 17; calcium-binding domain is found at 1113–1154 (DIDECQRDPLLCRGGVCLNTEGSYRCECPPGHQLAPNISACI). S1135 carries an O-linked (Glc) serine glycan. N1149 carries an N-linked (GlcNAc...) asparagine glycan. An EGF-like 18; calcium-binding domain is found at 1155 to 1196 (DINECELSAHLCPHGRCVNLIGKYQCACNPGYHSTPDRLFCV). The 41-residue stretch at 1197–1237 (DIDECSIMNGGCETFCTNSEGSYECSCQPGFALMPDQRSCT) folds into the EGF-like 19; calcium-binding domain. S1218 carries O-linked (Glc) serine glycosylation. In terms of domain architecture, EGF-like 20; calcium-binding spans 1238 to 1279 (DIDECEDNPNICDGGQCTNIPGEYRCLCYDGFMASEDMKTCV). The EGF-like 21; calcium-binding domain occupies 1280-1321 (DVNECDLNPNICLSGTCENTKGSFICHCDMGYSGKKGKTGCT). S1302 carries O-linked (Glc) serine glycosylation. One can recognise an EGF-like 22; calcium-binding domain in the interval 1322 to 1362 (DINECEIGAHNCDRHAVCTNTAGSFKCSCSPGWIGDGIKCT). The O-linked (Glc) serine glycan is linked to S1345. The EGF-like 23; calcium-binding domain occupies 1363–1403 (DLDECSNGTHMCSQHADCKNTMGSYRCLCKEGYTGDGFTCT). Residue N1369 is glycosylated (N-linked (GlcNAc...) asparagine). S1386 carries an O-linked (Glc) serine glycan. Residues 1404 to 1445 (DLDECSENLNLCGNGQCLNAPGGYRCECDMGFVPSADGKACE) form the EGF-like 24; calcium-binding domain. One can recognise an EGF-like 25; calcium-binding domain in the interval 1446–1486 (DIDECSLPNICVFGTCHNLPGLFRCECEIGYELDRSGGNCT). The N-linked (GlcNAc...) asparagine glycan is linked to N1484. An EGF-like 26; calcium-binding domain is found at 1487–1527 (DVNECLDPTTCISGNCVNTPGSYTCDCPPDFELNPTRVGCV). O-linked (Glc) serine glycosylation occurs at S1508. The C-terminal domain stretch occupies residues 1528–2731 (DTRSGNCYLD…GYPKRGRKRR (1204 aa)). In terms of domain architecture, TB 6 spans 1532 to 1589 (GNCYLDIRPRGDNGDTACSNEIGVGVSKASCCCSLGKAWGTPCELCPPVNTSEYKILC). The short motif at 1541–1543 (RGD) is the Cell attachment site element. An N-linked (GlcNAc...) asparagine glycan is attached at N1581. The EGF-like 27; calcium-binding domain occupies 1606–1647 (DIDECQELPGLCQGGKCINTFGSFQCRCPTGYYLNEDTRVCD). The O-linked (Glc) serine glycan is linked to S1628. In terms of domain architecture, EGF-like 28; calcium-binding spans 1648 to 1688 (DVNECETPGICGPGTCYNTVGNYTCICPPDYMQVNGGNNCM). An N-linked (GlcNAc...) asparagine glycan is attached at N1669. Positions 1693–1748 (SLCYRNYYADNQTCDGELLFNMTKKMCCCSYNIGRAWNKPCEQCPIPSTDEFATLC) constitute a TB 7 domain. N1703 and N1713 each carry an N-linked (GlcNAc...) asparagine glycan. Positions 1766-1807 (DIDECREIPGVCENGVCINMVGSFRCECPVGFFYNDKLLVCE) constitute an EGF-like 29; calcium-binding domain. Cystine bridges form between C1770-C1782, C1777-C1791, C1793-C1806, C1812-C1824, C1818-C1833, C1835-C1847, C1853-C1865, C1860-C1874, C1876-C1889, C1895-C1905, C1900-C1914, C1916-C1928, C1934-C1947, C1942-C1956, C1958-C1971, C1977-C1989, C1984-C1998, C2000-C2011, C2017-C2029, C2024-C2038, C2040-C2053, C2061-C2083, C2070-C2096, C2084-C2099, C2085-C2111, C2131-C2142, C2137-C2151, C2153-C2164, C2170-C2181, C2176-C2190, C2192-C2204, C2210-C2221, C2217-C2230, C2232-C2245, C2251-C2265, C2258-C2274, C2276-C2289, C2295-C2307, C2302-C2316, and C2318-C2331. The EGF-like 30; calcium-binding domain occupies 1808–1848 (DIDECQNGPVCQRNAECINTAGSYRCDCKPGYRFTSTGQCN). S1830 carries an O-linked (Glc) serine glycan. The region spanning 1849–1890 (DRNECQEIPNICSHGQCIDTVGSFYCLCHTGFKTNADQTMCL) is the EGF-like 31; calcium-binding domain. S1871 carries an O-linked (Glc) serine glycan. The region spanning 1891 to 1929 (DINECERDACGNGTCRNTIGSFNCRCNHGFILSHNNDCI) is the EGF-like 32; calcium-binding domain. N1902 carries N-linked (GlcNAc...) asparagine glycosylation. O-linked (Glc) serine glycosylation occurs at S1911. The region spanning 1930–1972 (DVDECATGNGNLCRNGQCINTVGSFQCQCNEGYEVAPDGRTCV) is the EGF-like 33; calcium-binding domain. S1953 carries an O-linked (Glc) serine glycan. An EGF-like 34; calcium-binding domain is found at 1973–2012 (DINECLLDPRKCAPGTCQNLDGSYRCICPPGYSLQNDKCE). In terms of domain architecture, EGF-like 35; calcium-binding spans 2013–2054 (DIDECVEEPEICALGTCSNTEGSFKCLCPDGFSLSSTGRRCQ). S2035 carries O-linked (Glc) serine glycosylation. In terms of domain architecture, TB 8 spans 2059 to 2111 (SYCYAKFEGGKCSSPKSRNHSKQECCCALKGEGWGDPCELCPTEPDEAFRQIC). N2077 carries an N-linked (GlcNAc...) asparagine glycan. One can recognise an EGF-like 36; calcium-binding domain in the interval 2127–2165 (DMDECKEPDVCKHGQCINTDGSYRCECPFGYILQGNECV). O-linked (Glc) serine glycosylation occurs at S2148. The 40-residue stretch at 2166–2205 (DTDECSVGNPCGNGTCKNVIGGFECTCEEGFEPGPMMTCE) folds into the EGF-like 37; calcium-binding domain. N2178 carries N-linked (GlcNAc...) asparagine glycosylation. Positions 2206-2246 (DINECAQNPLLCAFRCVNTYGSYECKCPAGYVLREDRRMCK) constitute an EGF-like 38; calcium-binding domain. S2227 carries O-linked (Glc) serine glycosylation. Residues 2247 to 2290 (DEDECEEGKHDCAEKQMECKNLIGTYLCICGPGYQRRPDGEGCV) form the EGF-like 39; calcium-binding domain. The 42-residue stretch at 2291–2332 (DENECQTKPGICENGRCLNTRGSYTCECNDGFTASPNQDECL) folds into the EGF-like 40; calcium-binding domain. S2313 is a glycosylation site (O-linked (Glc) serine). The 54-residue stretch at 2337-2390 (GYCFTEVLQNMCQIGSSNRNPVTKSECCCDGGRGWGPHCEICPFQGTVAFKKLC) folds into the TB 9 domain. One can recognise an EGF-like 41; calcium-binding domain in the interval 2402-2443 (DIDECKVIHDVCRNGECVNDRGSYHCICKTGYTPDITGTACV). Intrachain disulfides connect C2406-C2418, C2413-C2427, C2429-C2442, C2448-C2459, C2455-C2468, C2470-C2483, C2489-C2500, C2496-C2509, C2511-C2522, C2528-C2541, C2535-C2550, C2552-C2565, C2571-C2581, C2577-C2590, C2592-C2605, C2611-C2622, C2617-C2631, C2633-C2646, C2652-C2663, C2659-C2672, and C2674-C2686. The EGF-like 42; calcium-binding domain maps to 2444–2484 (DLNECNQAPKPCNFICKNTEGSYQCSCPKGYILQEDGRSCK). O-linked (Glc) serine glycosylation occurs at S2465. The 39-residue stretch at 2485-2523 (DLDECATKQHNCQFLCVNTIGSFTCKCPPGFTQHHTACI) folds into the EGF-like 43; calcium-binding domain. One can recognise an EGF-like 44; calcium-binding domain in the interval 2524–2566 (DNNECTSDINLCGSKGICQNTPGSFTCECQRGFSLDPSGASCE). S2547 carries O-linked (Glc) serine glycosylation. Positions 2567–2606 (DVDECEGNHRCQHGCQNIIGGYRCSCPQGYLQHYQWNQCV) constitute an EGF-like 45; calcium-binding domain. One can recognise an EGF-like 46; calcium-binding domain in the interval 2607 to 2647 (DENECLSAHICGGASCHNTLGSYKCMCPAGFQYEQFSGGCQ). S2628 carries an O-linked (Glc) serine glycan. In terms of domain architecture, EGF-like 47; calcium-binding spans 2648–2687 (DINECGSAQAPCSYGCSNTEGGYLCACPPGYFRIGQGHCV). Phosphoserine occurs at positions 2702 and 2709. N2734, N2750, and N2767 each carry an N-linked (GlcNAc...) asparagine glycan.

Belongs to the fibrillin family. In terms of assembly, interacts with COL16A1. Interacts with integrin alpha-V/beta-3. Interacts with ADAMTS10; this interaction promotes microfibril assembly. Interacts with THSD4; this interaction promotes fibril formation. Interacts (via N-terminal domain) with FBLN2 and FBLN5. Interacts with ELN. Forms a ternary complex with ELN and FBLN2 or FBLN5 and a significant interaction with ELN seen only in the presence of FBLN2 or FBLN5. Interacts (via N-terminal domain) with LTBP2 (via C-terminal domain) in a Ca(+2)-dependent manner. Interacts (via N-terminal domain) with LTBP1 (via C-terminal domain). Interacts with integrins ITGA5:ITGB1, ITGAV:ITGB3 and ITGAV:ITGB6. Interacts (via N-terminal domain) with BMP2, BMP4, BMP7, BMP10 and GDF5. Interacts (via N-terminal domain) with MFAP2 and MFAP5. Interacts with ADAMTSL5. Interacts with MFAP4. Interacts (via N-terminal domain) with TNFSF11 in a Ca(+2)-dependent manner. Interacts (via N-terminal domain) with EFEMP2; this interaction inhibits EFEMP2 binding to LOX and ELN. Cleavage of N- and C-terminus by furin is required for incorporation into the extracellular matrix and assembly into microfibrils. The C-terminus, which corresponds to the Asprosin chain, was initially thought to constitute a propeptide. Fibrillin-1 and Asprosin chains are still linked together during the secretion from cells, but are subsequently separated by furin, an essential step for incorporation of Fibrillin-1 into the nascent microfibrils. In terms of processing, forms intermolecular disulfide bonds either with other fibrillin-1 molecules or with other components of the microfibrils. Post-translationally, O-glycosylated on serine residues by POGLUT2 and POGLUT3 which is necessary for efficient protein secretion.

It localises to the secreted. It is found in the extracellular space. Its subcellular location is the extracellular matrix. In terms of biological role, structural component of the 10-12 nm diameter microfibrils of the extracellular matrix, which conveys both structural and regulatory properties to load-bearing connective tissues. Fibrillin-1-containing microfibrils provide long-term force bearing structural support. In tissues such as the lung, blood vessels and skin, microfibrils form the periphery of the elastic fiber, acting as a scaffold for the deposition of elastin. In addition, microfibrils can occur as elastin-independent networks in tissues such as the ciliary zonule, tendon, cornea and glomerulus where they provide tensile strength and have anchoring roles. Fibrillin-1 also plays a key role in tissue homeostasis through specific interactions with growth factors, such as the bone morphogenetic proteins (BMPs), growth and differentiation factors (GDFs) and latent transforming growth factor-beta-binding proteins (LTBPs), cell-surface integrins and other extracellular matrix protein and proteoglycan components. Regulates osteoblast maturation by controlling TGF-beta bioavailability and calibrating TGF-beta and BMP levels, respectively. Negatively regulates osteoclastogenesis by binding and sequestering an osteoclast differentiation and activation factor TNFSF11. This leads to disruption of TNFSF11-induced Ca(2+) signaling and impairment of TNFSF11-mediated nuclear translocation and activation of transcription factor NFATC1 which regulates genes important for osteoclast differentiation and function. Mediates cell adhesion via its binding to cell surface receptors integrins ITGAV:ITGB3 and ITGA5:ITGB1. Binds heparin and this interaction plays an important role in the assembly of microfibrils. Functionally, hormone that targets the liver to increase plasma glucose levels. Secreted by white adipose tissue and circulates in the plasma. Acts in response to fasting and promotes blood glucose elevation by binding to the surface of hepatocytes. Promotes hepatocyte glucose release by activating the protein kinase A activity in the liver, resulting in rapid glucose release into the circulation. This Bos taurus (Bovine) protein is Fibrillin-1.